The following is a 61-amino-acid chain: Small ribosomal subunit protein uS14 (61 aa).

4 residues coordinate Zn(2+): Cys24, Cys27, Cys40, and Cys43.

It belongs to the universal ribosomal protein uS14 family. Zinc-binding uS14 subfamily. As to quaternary structure, part of the 30S ribosomal subunit. Contacts proteins S3 and S10. The cofactor is Zn(2+).

Its function is as follows. Binds 16S rRNA, required for the assembly of 30S particles and may also be responsible for determining the conformation of the 16S rRNA at the A site. This is Small ribosomal subunit protein uS14 from Rhodococcus erythropolis (strain PR4 / NBRC 100887).